Here is a 156-residue protein sequence, read N- to C-terminus: Regulatory protein RecX (156 aa).

Belongs to the RecX family.

It is found in the cytoplasm. Functionally, modulates RecA activity. In Pseudomonas putida (strain W619), this protein is Regulatory protein RecX.